Here is a 988-residue protein sequence, read N- to C-terminus: Voltage-gated delayed rectifier potassium channel KCNH5 (988 aa).

The Cytoplasmic portion of the chain corresponds to 1 to 217 (MPGGKRGLVA…LHYCAFKTTW (217 aa)). Residues 14–86 (TFLENIVRRS…TIEKVRQTFD (73 aa)) enclose the PAS domain. The PAC domain occupies 91–143 (NCFEVLLYKKNRTPVWFYMQIAPIRNEHEKVVLFLCTFKDITLFKQPIEDDST). The helical transmembrane segment at 218–238 (DWVILILTFYTAIMVPYNVSF) threads the bilayer. Residues 239 to 243 (KTKQN) are Extracellular-facing. A helical membrane pass occupies residues 244 to 264 (NIAWLVLDSVVDVIFLVDIVL). Over 265–291 (NFHTTFVGPGGEVISDPKLIRMNYLKT) the chain is Cytoplasmic. A helical membrane pass occupies residues 292 to 312 (WFVIDLLSCLPYDIINAFENV). The Extracellular segment spans residues 313–319 (DEGISSL). The chain crosses the membrane as a helical; Voltage-sensor span at residues 320–340 (FSSLKVVRLLRLGRVARKLDH). The Cytoplasmic segment spans residues 341 to 346 (YLEYGA). Residues 347–367 (AVLVLLVCVFGLVAHWLACIW) traverse the membrane as a helical segment. Topologically, residues 368-419 (YSIGDYEVIDEVTNTIQIDSWLYQLALSIGTPYRYNTSAGIWEGGPSKDSLY) are extracellular. Residue Asn403 is glycosylated (N-linked (GlcNAc...) asparagine). Positions 420-440 (VSSLYFTMTSLTTIGFGNIAP) form an intramembrane region, pore-forming. Residues 432–437 (TIGFGN) carry the Selectivity filter motif. Residues 441–446 (TTDVEK) lie on the Extracellular side of the membrane. Residues 447-467 (MFSVAMMMVGSLLYATIFGNV) form a helical membrane-spanning segment. The Cytoplasmic segment spans residues 468 to 988 (TTIFQQMYAN…PESDKDEINF (521 aa)). A nucleoside 3',5'-cyclic phosphate is bound at residue 550–668 (AFRLASDGCL…SFSRNLTLTC (119 aa)). The calmodulin-binding stretch occupies residues 704–715 (HPVRKLFQKFKQ). The interval 721 to 741 (IQGSAQSDPERSQLQVESRPL) is disordered. Residues 723–741 (GSAQSDPERSQLQVESRPL) show a composition bias toward polar residues. Lys785 is covalently cross-linked (Glycyl lysine isopeptide (Lys-Gly) (interchain with G-Cter in ubiquitin)). The tract at residues 838-893 (GLLSEDPKGSDSENSVTKNPLRKTDSCDSGITKSDLRLDKAGEARSPLEHSPSQAD) is disordered. Over residues 871–885 (SDLRLDKAGEARSPL) the composition is skewed to basic and acidic residues. Ser883 is modified (phosphoserine). Residues 909 to 948 (TLQEVKHELKEDIQLLSCRMTALEKQVAEILKLLSEKSVP) form a CAD (involved in subunit assembly) region.

Belongs to the potassium channel family. H (Eag) (TC 1.A.1.20) subfamily. Kv10.2/KCNH5 sub-subfamily. As to quaternary structure, homotetramer. The potassium channel is probably composed of a homo- or heterotetrameric complex of pore-forming alpha subunits that can associate with modulating beta subunits. Heteromultimer with KCNH1/EAG.

It localises to the membrane. It carries out the reaction K(+)(in) = K(+)(out). Its function is as follows. Pore-forming (alpha) subunit of a voltage-gated delayed rectifier potassium channel that mediates outward-rectifying potassium currents which, on depolarization, reaches a steady-state level and do not inactivate. The kinetic is characterized by a slow activation time course and a small voltage dependence of the activation time constants, therefore, starts to open at more negative voltages. The activation kinetics depend on the prepulse potential and external divalent cation concentration. The time course of activation is biphasic with a fast and a slowly activating current component. With negative prepulses, the current activation is delayed and slowed down several fold, whereas more positive prepulses speed up activation, therefore the activation rate depends on holding potential. The polypeptide is Voltage-gated delayed rectifier potassium channel KCNH5 (Mus musculus (Mouse)).